The chain runs to 432 residues: 3-phosphoshikimate 1-carboxyvinyltransferase (432 aa).

Residues Lys-23, Ser-24, and Arg-28 each contribute to the 3-phosphoshikimate site. Residue Lys-23 coordinates phosphoenolpyruvate. Phosphoenolpyruvate is bound by residues Gly-95 and Arg-123. Positions 166, 168, 315, and 342 each coordinate 3-phosphoshikimate. Gln-168 provides a ligand contact to phosphoenolpyruvate. Catalysis depends on Asp-315, which acts as the Proton acceptor. Residues Arg-346 and Arg-390 each coordinate phosphoenolpyruvate.

It belongs to the EPSP synthase family. In terms of assembly, monomer.

It is found in the cytoplasm. The catalysed reaction is 3-phosphoshikimate + phosphoenolpyruvate = 5-O-(1-carboxyvinyl)-3-phosphoshikimate + phosphate. It participates in metabolic intermediate biosynthesis; chorismate biosynthesis; chorismate from D-erythrose 4-phosphate and phosphoenolpyruvate: step 6/7. Catalyzes the transfer of the enolpyruvyl moiety of phosphoenolpyruvate (PEP) to the 5-hydroxyl of shikimate-3-phosphate (S3P) to produce enolpyruvyl shikimate-3-phosphate and inorganic phosphate. This is 3-phosphoshikimate 1-carboxyvinyltransferase from Lactiplantibacillus plantarum (strain ATCC BAA-793 / NCIMB 8826 / WCFS1) (Lactobacillus plantarum).